The following is a 409-amino-acid chain: Outer membrane protein assembly factor BamB (409 aa).

The signal sequence occupies residues 1-34 (MAGNILLLILDYVFHAGSRTLRVCILSLLILLSG). C35 carries N-palmitoyl cysteine lipidation. A lipid anchor (S-diacylglycerol cysteine) is attached at C35.

It belongs to the BamB family. In terms of assembly, part of the Bam complex.

It localises to the cell outer membrane. Part of the outer membrane protein assembly complex, which is involved in assembly and insertion of beta-barrel proteins into the outer membrane. This chain is Outer membrane protein assembly factor BamB, found in Nitrosomonas eutropha (strain DSM 101675 / C91 / Nm57).